We begin with the raw amino-acid sequence, 218 residues long: Thiopurine S-methyltransferase (218 aa).

Positions 10, 45, 66, and 123 each coordinate S-adenosyl-L-methionine.

The protein belongs to the class I-like SAM-binding methyltransferase superfamily. TPMT family.

It localises to the cytoplasm. The enzyme catalyses S-adenosyl-L-methionine + a thiopurine = S-adenosyl-L-homocysteine + a thiopurine S-methylether.. The chain is Thiopurine S-methyltransferase from Shewanella loihica (strain ATCC BAA-1088 / PV-4).